A 101-amino-acid chain; its full sequence is Ascorbate-specific PTS system EIIB component (101 aa).

The region spanning V3 to F96 is the PTS EIIB type-2 domain. The Phosphocysteine intermediate role is filled by C9. The residue at position 9 (C9) is a Phosphocysteine.

It is found in the cytoplasm. The catalysed reaction is N(pros)-phospho-L-histidyl-[protein] + L-ascorbate(out) = L-ascorbate 6-phosphate(in) + L-histidyl-[protein]. Functionally, the phosphoenolpyruvate-dependent sugar phosphotransferase system (sugar PTS), a major carbohydrate active transport system, catalyzes the phosphorylation of incoming sugar substrates concomitantly with their translocation across the cell membrane. The enzyme II UlaABC PTS system is involved in ascorbate transport. The sequence is that of Ascorbate-specific PTS system EIIB component (ulaB) from Escherichia coli O6:H1 (strain CFT073 / ATCC 700928 / UPEC).